Consider the following 388-residue polypeptide: Probable ubiquitin-conjugating enzyme E2 L709 (388 aa).

Positions Asn-3–Phe-162 constitute a UBC core domain. Catalysis depends on Cys-95, which acts as the Glycyl thioester intermediate. Residues Val-195–Lys-388 are disordered. Acidic residues-rich tracts occupy residues Ser-221–Ser-238 and Asp-246–Glu-297. A compositionally biased stretch (low complexity) spans Lys-310–Lys-388.

The protein belongs to the ubiquitin-conjugating enzyme family.

The catalysed reaction is S-ubiquitinyl-[E1 ubiquitin-activating enzyme]-L-cysteine + [E2 ubiquitin-conjugating enzyme]-L-cysteine = [E1 ubiquitin-activating enzyme]-L-cysteine + S-ubiquitinyl-[E2 ubiquitin-conjugating enzyme]-L-cysteine.. The protein operates within protein modification; protein ubiquitination. In terms of biological role, catalyzes the covalent attachment of ubiquitin to other proteins. This Acanthamoeba polyphaga (Amoeba) protein is Probable ubiquitin-conjugating enzyme E2 L709.